A 279-amino-acid polypeptide reads, in one-letter code: Urease accessory protein UreD (279 aa).

The protein belongs to the UreD family. In terms of assembly, ureD, UreF and UreG form a complex that acts as a GTP-hydrolysis-dependent molecular chaperone, activating the urease apoprotein by helping to assemble the nickel containing metallocenter of UreC. The UreE protein probably delivers the nickel.

It is found in the cytoplasm. Required for maturation of urease via the functional incorporation of the urease nickel metallocenter. The chain is Urease accessory protein UreD from Trichormus variabilis (strain ATCC 29413 / PCC 7937) (Anabaena variabilis).